A 565-amino-acid polypeptide reads, in one-letter code: MAQRIFTLILLLCSTSVFAGLFDAPGRSQFVPADQAFTFDFQQNQHDLNLTWQIKDGYYLYRKQIRITPEHAKIADVQLPQGVWHEDEFYGKSEIYRDRLTLPVTINQASAGATLTVTYQGCADAGFCYPPETKTVPLSEVVANNAAPQPVSVPQQEQPTAQLPFSALWALLIGIGIAFTPCVLPMYPLISGIVLGGKQRLSTARALLLTFIYVQGMALTYTALGLVVAAAGLQFQAALQHPYVLIGLAIVFTLLAMSMFGLFTLQLPSSLQTRLTLMSNRQQGGSPGGVFVMGAIAGLICSPCTTAPLSAILLYIAQSGNMWLGGGTLYLYALGMGLPLMLITVFGNRLLPKSGPWMEQVKTAFGFVILALPVFLLERVIGDIWGLRLWSALGVAFFGGAFITSLQAKRGWMRVVQIILLAAALVSVRPLQDWAFGATHTAQTQTHLNFTQIKTVDELNQALVEAKGKPVMLDLYADWCVACKEFEKYTFSDPQVQKALADTVLLQANVTANDAQDVALLKHLNVLGLPTILFFDGQGQEHPQARVTGFMDAETFSAHLRDRQP.

Residues 1–19 (MAQRIFTLILLLCSTSVFA) form the signal peptide. Cystine bridges form between Cys-122-Cys-128 and Cys-182-Cys-304. A run of 7 helical transmembrane segments spans residues 163–183 (LPFSALWALLIGIGIAFTPCV), 208–228 (LLTFIYVQGMALTYTALGLVV), 243–263 (YVLIGLAIVFTLLAMSMFGLF), 296–316 (IAGLICSPCTTAPLSAILLYI), 323–343 (WLGGGTLYLYALGMGLPLMLI), 365–385 (FGFVILALPVFLLERVIGDIW), and 386–406 (GLRLWSALGVAFFGGAFITSL). The Thioredoxin domain maps to 434–565 (WAFGATHTAQ…FSAHLRDRQP (132 aa)). A disulfide bridge links Cys-480 with Cys-483.

The protein belongs to the thioredoxin family. DsbD subfamily.

It localises to the cell inner membrane. It carries out the reaction [protein]-dithiol + NAD(+) = [protein]-disulfide + NADH + H(+). It catalyses the reaction [protein]-dithiol + NADP(+) = [protein]-disulfide + NADPH + H(+). In terms of biological role, required to facilitate the formation of correct disulfide bonds in some periplasmic proteins and for the assembly of the periplasmic c-type cytochromes. Acts by transferring electrons from cytoplasmic thioredoxin to the periplasm. This transfer involves a cascade of disulfide bond formation and reduction steps. In Shigella dysenteriae serotype 1 (strain Sd197), this protein is Thiol:disulfide interchange protein DsbD.